The chain runs to 271 residues: Formamidopyrimidine-DNA glycosylase (271 aa).

Catalysis depends on Pro2, which acts as the Schiff-base intermediate with DNA. Glu3 (proton donor) is an active-site residue. Lys58 functions as the Proton donor; for beta-elimination activity in the catalytic mechanism. 3 residues coordinate DNA: His92, Arg111, and Lys152. The FPG-type zinc-finger motif lies at 237-271 (YVYGKVQKPCKICNNTITLIRQNGRSTYFCNACQN). Arg261 serves as the catalytic Proton donor; for delta-elimination activity.

This sequence belongs to the FPG family. Monomer. The cofactor is Zn(2+).

The enzyme catalyses Hydrolysis of DNA containing ring-opened 7-methylguanine residues, releasing 2,6-diamino-4-hydroxy-5-(N-methyl)formamidopyrimidine.. It catalyses the reaction 2'-deoxyribonucleotide-(2'-deoxyribose 5'-phosphate)-2'-deoxyribonucleotide-DNA = a 3'-end 2'-deoxyribonucleotide-(2,3-dehydro-2,3-deoxyribose 5'-phosphate)-DNA + a 5'-end 5'-phospho-2'-deoxyribonucleoside-DNA + H(+). In terms of biological role, involved in base excision repair of DNA damaged by oxidation or by mutagenic agents. Acts as a DNA glycosylase that recognizes and removes damaged bases. Has a preference for oxidized purines, such as 7,8-dihydro-8-oxoguanine (8-oxoG). Has AP (apurinic/apyrimidinic) lyase activity and introduces nicks in the DNA strand. Cleaves the DNA backbone by beta-delta elimination to generate a single-strand break at the site of the removed base with both 3'- and 5'-phosphates. The protein is Formamidopyrimidine-DNA glycosylase of Wolbachia sp. subsp. Brugia malayi (strain TRS).